The following is a 436-amino-acid chain: Probable transporter MCH1 (436 aa).

The next 7 helical transmembrane spans lie at 27–47 (VVAFLISLLSCLVAGSILLFT), 66–86 (MISSLSALGMYFCLPVLGYLA), 93–113 (LLSLFSIWFFCPSYFVNSYLV), 119–139 (SVIGFCVCFCFIGLATSSLYF), 155–175 (LAISLPITCYGLSALLGAQIL), 188–208 (LEVVFSFFAWLYLVVGIASFV), and 249–269 (FVSFVKDPSAWILLVSLILNI). Asn278 carries an N-linked (GlcNAc...) asparagine glycan. Helical transmembrane passes span 295 to 312 (VSIMAASSTGARLLLGVL), 325 to 345 (LLVVVIVVGVAGQMSETSAIL), 347 to 367 (GVSYGGMFTIYPTIVASIWGI), 373 to 393 (TWGSFMVAPALGSVIFSMFYG), and 410 to 430 (TAGAMIVSCIFVLLAWKIWYA).

It belongs to the major facilitator superfamily.

The protein resides in the vacuole membrane. Probable transporter. The chain is Probable transporter MCH1 (MCH1) from Candida albicans (strain SC5314 / ATCC MYA-2876) (Yeast).